Reading from the N-terminus, the 679-residue chain is Methionine--tRNA ligase (679 aa).

Positions 15 to 25 match the 'HIGH' region motif; that stretch reads PYANGPIHLGH. 4 residues coordinate Zn(2+): cysteine 146, cysteine 149, cysteine 159, and cysteine 162. Positions 332–336 match the 'KMSKS' region motif; the sequence is KMSKS. ATP is bound at residue lysine 335. The 102-residue stretch at 578-679 folds into the tRNA-binding domain; it reads DFAKIDLRIA…EGAQPGMKVK (102 aa).

This sequence belongs to the class-I aminoacyl-tRNA synthetase family. MetG type 1 subfamily. Homodimer. The cofactor is Zn(2+).

The protein resides in the cytoplasm. The enzyme catalyses tRNA(Met) + L-methionine + ATP = L-methionyl-tRNA(Met) + AMP + diphosphate. Functionally, is required not only for elongation of protein synthesis but also for the initiation of all mRNA translation through initiator tRNA(fMet) aminoacylation. In Shewanella pealeana (strain ATCC 700345 / ANG-SQ1), this protein is Methionine--tRNA ligase.